The chain runs to 178 residues: Ribosome maturation factor RimM (178 aa).

The region spanning 99-178 is the PRC barrel domain; the sequence is QGEFYWRDLI…EITVDWDPGF (80 aa).

It belongs to the RimM family. Binds ribosomal protein uS19.

Its subcellular location is the cytoplasm. In terms of biological role, an accessory protein needed during the final step in the assembly of 30S ribosomal subunit, possibly for assembly of the head region. Essential for efficient processing of 16S rRNA. May be needed both before and after RbfA during the maturation of 16S rRNA. It has affinity for free ribosomal 30S subunits but not for 70S ribosomes. The polypeptide is Ribosome maturation factor RimM (Pseudoalteromonas translucida (strain TAC 125)).